We begin with the raw amino-acid sequence, 436 residues long: Gamma-glutamyl phosphate reductase (436 aa).

The protein belongs to the gamma-glutamyl phosphate reductase family.

The protein resides in the cytoplasm. It catalyses the reaction L-glutamate 5-semialdehyde + phosphate + NADP(+) = L-glutamyl 5-phosphate + NADPH + H(+). The protein operates within amino-acid biosynthesis; L-proline biosynthesis; L-glutamate 5-semialdehyde from L-glutamate: step 2/2. Its function is as follows. Catalyzes the NADPH-dependent reduction of L-glutamate 5-phosphate into L-glutamate 5-semialdehyde and phosphate. The product spontaneously undergoes cyclization to form 1-pyrroline-5-carboxylate. In Prochlorococcus marinus (strain MIT 9301), this protein is Gamma-glutamyl phosphate reductase.